The following is a 303-amino-acid chain: Glutaminase (303 aa).

The substrate site is built by serine 61, asparagine 111, glutamate 155, asparagine 162, tyrosine 186, tyrosine 238, and valine 256.

Belongs to the glutaminase family. As to quaternary structure, homotetramer.

It catalyses the reaction L-glutamine + H2O = L-glutamate + NH4(+). The sequence is that of Glutaminase from Marinomonas sp. (strain MWYL1).